A 159-amino-acid polypeptide reads, in one-letter code: NADH-quinone oxidoreductase subunit B (159 aa).

4 residues coordinate [4Fe-4S] cluster: C32, C33, C97, and C126.

Belongs to the complex I 20 kDa subunit family. As to quaternary structure, NDH-1 is composed of 14 different subunits. Subunits NuoB, C, D, E, F, and G constitute the peripheral sector of the complex. It depends on [4Fe-4S] cluster as a cofactor.

Its subcellular location is the cell inner membrane. The catalysed reaction is a quinone + NADH + 5 H(+)(in) = a quinol + NAD(+) + 4 H(+)(out). Functionally, NDH-1 shuttles electrons from NADH, via FMN and iron-sulfur (Fe-S) centers, to quinones in the respiratory chain. The immediate electron acceptor for the enzyme in this species is believed to be ubiquinone. Couples the redox reaction to proton translocation (for every two electrons transferred, four hydrogen ions are translocated across the cytoplasmic membrane), and thus conserves the redox energy in a proton gradient. The chain is NADH-quinone oxidoreductase subunit B from Helicobacter pylori (strain HPAG1).